The sequence spans 260 residues: Sulfoquinovose 1-dehydrogenase (260 aa).

Tyrosine 160 (proton acceptor) is an active-site residue.

Belongs to the short-chain dehydrogenases/reductases (SDR) family.

The catalysed reaction is 6-sulfo-D-quinovose + NAD(+) = 6-deoxy-6-sulfo-D-glucono-1,5-lactone + NADH + H(+). Its function is as follows. Catalyzes the oxidation of sulfoquinovose to 6-deoxy-6-sulfo-D-glucono-1,5-lactone, with a strong preference for NAD(+) as the electron acceptor. Is involved in a degradation pathway of sulfoquinovose (SQ) that allows P.putida SQ1 to use SQ as the sole carbon and energy source for growth. This chain is Sulfoquinovose 1-dehydrogenase, found in Pseudomonas putida (Arthrobacter siderocapsulatus).